Reading from the N-terminus, the 519-residue chain is Pleckstrin homology domain-containing family A member 8 (519 aa).

The region spanning 1–93 (MEGVLYKWTN…WLVALGSAKA (93 aa)) is the PH domain. Threonine 139 carries the phosphothreonine modification. Position 145 is a phosphoserine (serine 145). Position 153 is a phosphothreonine (threonine 153). The tract at residues 275 to 302 (GEENLESHDKDPAQPGSDSVCSPESPWE) is disordered. The segment at 330-473 (IPTEAFLASC…EDFVAALTIK (144 aa)) is glycolipid transfer protein homology domain.

In terms of assembly, homodimer. Interacts with ARF1; the interaction together with phosphatidylinositol 4-phosphate binding is required for FAPP2 GlcCer transfer ability.

It localises to the golgi apparatus. Its subcellular location is the trans-Golgi network membrane. The protein resides in the membrane. Its function is as follows. Cargo transport protein that is required for apical transport from the trans-Golgi network (TGN). Transports AQP2 from the trans-Golgi network (TGN) to sites of AQP2 phosphorylation. Mediates the non-vesicular transport of glucosylceramide (GlcCer) from the trans-Golgi network (TGN) to the plasma membrane and plays a pivotal role in the synthesis of complex glycosphingolipids. Binding of both phosphatidylinositol 4-phosphate (PIP) and ARF1 are essential for the GlcCer transfer ability. Also required for primary cilium formation, possibly by being involved in the transport of raft lipids to the apical membrane, and for membrane tubulation. In Mus musculus (Mouse), this protein is Pleckstrin homology domain-containing family A member 8 (Plekha8).